A 1044-amino-acid polypeptide reads, in one-letter code: Phosphatidylinositol 4,5-bisphosphate 3-kinase catalytic subunit delta isoform (1044 aa).

Residues 16–105 enclose the PI3K-ABD domain; it reads ENQSVVVDFL…LPVLRLVARE (90 aa). The 92-residue stretch at 187–278 folds into the PI3K-RBD domain; sequence NRALLVNVKF…GLTPHLTMVH (92 aa). Positions 287 to 312 are disordered; sequence DEQSNPAPQVQKPRAKPPPIPAKKPS. Positions 319-476 constitute a C2 PI3K-type domain; it reads LEQPFRIELI…SAAALLICLP (158 aa). One can recognise a PIK helical domain in the interval 497–674; it reads HSECVHVTEE…GLILEAYCRG (178 aa). Tyrosine 524 bears the Phosphotyrosine mark. In terms of domain architecture, PI3K/PI4K catalytic spans 745-1027; sequence CVEQCTFMDS…KFNEALRESW (283 aa). Residues 751–757 are G-loop; that stretch reads FMDSKMK. Positions 890-898 are catalytic loop; sequence GIGDRHSDN. The segment at 909–935 is activation loop; it reads HIDFGHFLGNFKTKFGINRERVPFILT. The residue at position 1039 (serine 1039) is a Phosphoserine; by autocatalysis.

This sequence belongs to the PI3/PI4-kinase family. In terms of assembly, heterodimer of a catalytic subunit PIK3CD and a p85 regulatory subunit (PIK3R1, PIK3R2 or PIK3R3). Interacts with ERAS. Interacts with HRAS. Autophosphorylation on Ser-1039 results in the almost complete inactivation of the lipid kinase activity. In humans, the highest levels of expression are seen in peripheral blood mononuclear cells, spleen, and thymus, and low levels of expression in testes, uterus, colon, and small intestine but not in other tissues examined including prostate, heart, brain, and liver. Isoform 2 is expressed in normal thymus, lung and spleen tissues, and is detected at low levels in normal lysates from colon and ovarian biopsies, at elevated levels in lysates from colorectal tumors and is abundantly expressed in some ovarian tumors (at protein level). Both isoform 1 and isoform 2 are widely expressed. Isoform 1 is expressed predominantly in leukocytes.

It is found in the cytoplasm. The catalysed reaction is a 1,2-diacyl-sn-glycero-3-phospho-(1D-myo-inositol-4,5-bisphosphate) + ATP = a 1,2-diacyl-sn-glycero-3-phospho-(1D-myo-inositol-3,4,5-trisphosphate) + ADP + H(+). It carries out the reaction a 1,2-diacyl-sn-glycero-3-phospho-(1D-myo-inositol) + ATP = a 1,2-diacyl-sn-glycero-3-phospho-(1D-myo-inositol-3-phosphate) + ADP + H(+). It catalyses the reaction 1-octadecanoyl-2-(5Z,8Z,11Z,14Z)-eicosatetraenoyl-sn-glycero-3-phospho-1D-myo-inositol 4,5-bisphosphate + ATP = 1-octadecanoyl-2-(5Z,8Z,11Z,14Z-eicosatetraenoyl)-sn-glycero-3-phospho-(1D-myo-inositol 3,4,5-triphosphate) + ADP + H(+). Its pathway is phospholipid metabolism; phosphatidylinositol phosphate biosynthesis. Activated by growth factors and cytokine receptors through a tyrosine-kinase-dependent mechanism. Activated by RAS. IC87114 inhibits lipid kinase activity and is selective in cells at doses up to 5-10 uM. IC87114 blocks T-cell receptor signaling in naive and memory T-cells and reduces cytokine production by memory T-cells. In terms of biological role, phosphoinositide-3-kinase (PI3K) phosphorylates phosphatidylinositol (PI) and its phosphorylated derivatives at position 3 of the inositol ring to produce 3-phosphoinositides. Uses ATP and PtdIns(4,5)P2 (phosphatidylinositol 4,5-bisphosphate) to generate phosphatidylinositol 3,4,5-trisphosphate (PIP3). PIP3 plays a key role by recruiting PH domain-containing proteins to the membrane, including AKT1 and PDPK1, activating signaling cascades involved in cell growth, survival, proliferation, motility and morphology. Mediates immune responses. Plays a role in B-cell development, proliferation, migration, and function. Required for B-cell receptor (BCR) signaling. Mediates B-cell proliferation response to anti-IgM, anti-CD40 and IL4 stimulation. Promotes cytokine production in response to TLR4 and TLR9. Required for antibody class switch mediated by TLR9. Involved in the antigen presentation function of B-cells. Involved in B-cell chemotaxis in response to CXCL13 and sphingosine 1-phosphate (S1P). Required for proliferation, signaling and cytokine production of naive, effector and memory T-cells. Required for T-cell receptor (TCR) signaling. Mediates TCR signaling events at the immune synapse. Activation by TCR leads to antigen-dependent memory T-cell migration and retention to antigenic tissues. Together with PIK3CG participates in T-cell development. Contributes to T-helper cell expansion and differentiation. Required for T-cell migration mediated by homing receptors SELL/CD62L, CCR7 and S1PR1 and antigen dependent recruitment of T-cells. Together with PIK3CG is involved in natural killer (NK) cell development and migration towards the sites of inflammation. Participates in NK cell receptor activation. Plays a role in NK cell maturation and cytokine production. Together with PIK3CG is involved in neutrophil chemotaxis and extravasation. Together with PIK3CG participates in neutrophil respiratory burst. Plays important roles in mast-cell development and mast cell mediated allergic response. Involved in stem cell factor (SCF)-mediated proliferation, adhesion and migration. Required for allergen-IgE-induced degranulation and cytokine release. The lipid kinase activity is required for its biological function. Isoform 2 may be involved in stabilizing total RAS levels, resulting in increased ERK phosphorylation and increased PI3K activity. This chain is Phosphatidylinositol 4,5-bisphosphate 3-kinase catalytic subunit delta isoform (PIK3CD), found in Homo sapiens (Human).